The sequence spans 201 residues: Glycerol-3-phosphate acyltransferase (201 aa).

Helical transmembrane passes span 3-23 (LFAI…SAIL), 53-73 (WVAL…VWLG), 80-100 (HFEL…PIFF), 115-135 (IAPI…LIFF), and 153-175 (FYVW…LLIY).

Belongs to the PlsY family. As to quaternary structure, probably interacts with PlsX.

The protein localises to the cell inner membrane. The catalysed reaction is an acyl phosphate + sn-glycerol 3-phosphate = a 1-acyl-sn-glycero-3-phosphate + phosphate. Its pathway is lipid metabolism; phospholipid metabolism. Catalyzes the transfer of an acyl group from acyl-phosphate (acyl-PO(4)) to glycerol-3-phosphate (G3P) to form lysophosphatidic acid (LPA). This enzyme utilizes acyl-phosphate as fatty acyl donor, but not acyl-CoA or acyl-ACP. This Pasteurella multocida (strain Pm70) protein is Glycerol-3-phosphate acyltransferase.